A 730-amino-acid polypeptide reads, in one-letter code: Elongation factor 2 (730 aa).

The tr-type G domain maps to 19–228 (QRIRNIGIVA…TGVSFKDVYD (210 aa)). Residues 28–35 (AHIDHGKT), 94–98 (DTPGH), and 148–151 (NKVD) each bind GTP. His-596 is modified (diphthamide).

It belongs to the TRAFAC class translation factor GTPase superfamily. Classic translation factor GTPase family. EF-G/EF-2 subfamily.

It is found in the cytoplasm. Functionally, catalyzes the GTP-dependent ribosomal translocation step during translation elongation. During this step, the ribosome changes from the pre-translocational (PRE) to the post-translocational (POST) state as the newly formed A-site-bound peptidyl-tRNA and P-site-bound deacylated tRNA move to the P and E sites, respectively. Catalyzes the coordinated movement of the two tRNA molecules, the mRNA and conformational changes in the ribosome. In Methanosarcina acetivorans (strain ATCC 35395 / DSM 2834 / JCM 12185 / C2A), this protein is Elongation factor 2.